An 870-amino-acid chain; its full sequence is DNA mismatch repair protein MutS (870 aa).

608-615 (GPNMAGKS) contributes to the ATP binding site.

The protein belongs to the DNA mismatch repair MutS family.

Its function is as follows. This protein is involved in the repair of mismatches in DNA. It is possible that it carries out the mismatch recognition step. This protein has a weak ATPase activity. The chain is DNA mismatch repair protein MutS from Persephonella marina (strain DSM 14350 / EX-H1).